A 737-amino-acid chain; its full sequence is UPF0507 protein YML002W (737 aa).

Residues 1–83 (MDSHQLELPD…FEDFNKNTGN (83 aa)) enclose the VPS9 domain.

It belongs to the UPF0507 family.

In Saccharomyces cerevisiae (strain ATCC 204508 / S288c) (Baker's yeast), this protein is UPF0507 protein YML002W.